Here is a 300-residue protein sequence, read N- to C-terminus: Phosphatidylserine decarboxylase proenzyme (300 aa).

Catalysis depends on charge relay system; for autoendoproteolytic cleavage activity residues Asp113, His169, and Ser256. Ser256 serves as the catalytic Schiff-base intermediate with substrate; via pyruvic acid; for decarboxylase activity. Residue Ser256 is modified to Pyruvic acid (Ser); by autocatalysis.

This sequence belongs to the phosphatidylserine decarboxylase family. PSD-B subfamily. Prokaryotic type II sub-subfamily. In terms of assembly, heterodimer of a large membrane-associated beta subunit and a small pyruvoyl-containing alpha subunit. The cofactor is pyruvate. Post-translationally, is synthesized initially as an inactive proenzyme. Formation of the active enzyme involves a self-maturation process in which the active site pyruvoyl group is generated from an internal serine residue via an autocatalytic post-translational modification. Two non-identical subunits are generated from the proenzyme in this reaction, and the pyruvate is formed at the N-terminus of the alpha chain, which is derived from the carboxyl end of the proenzyme. The autoendoproteolytic cleavage occurs by a canonical serine protease mechanism, in which the side chain hydroxyl group of the serine supplies its oxygen atom to form the C-terminus of the beta chain, while the remainder of the serine residue undergoes an oxidative deamination to produce ammonia and the pyruvoyl prosthetic group on the alpha chain. During this reaction, the Ser that is part of the protease active site of the proenzyme becomes the pyruvoyl prosthetic group, which constitutes an essential element of the active site of the mature decarboxylase.

It localises to the cell membrane. It carries out the reaction a 1,2-diacyl-sn-glycero-3-phospho-L-serine + H(+) = a 1,2-diacyl-sn-glycero-3-phosphoethanolamine + CO2. Its pathway is phospholipid metabolism; phosphatidylethanolamine biosynthesis; phosphatidylethanolamine from CDP-diacylglycerol: step 2/2. Its function is as follows. Catalyzes the formation of phosphatidylethanolamine (PtdEtn) from phosphatidylserine (PtdSer). The chain is Phosphatidylserine decarboxylase proenzyme from Ruminiclostridium cellulolyticum (strain ATCC 35319 / DSM 5812 / JCM 6584 / H10) (Clostridium cellulolyticum).